Here is a 347-residue protein sequence, read N- to C-terminus: Isopentenyl-diphosphate delta-isomerase (347 aa).

Substrate is bound at residue 5-6 (RK). Residues S61, 62-64 (SMT), S92, and N120 contribute to the FMN site. 92–94 (SMR) contacts substrate. Q159 contributes to the substrate binding site. Residue E160 coordinates Mg(2+). Residues K189, S214, T219, 269-271 (GLR), and 290-291 (AR) contribute to the FMN site.

It belongs to the IPP isomerase type 2 family. Homooctamer. Dimer of tetramers. It depends on FMN as a cofactor. NADPH serves as cofactor. Requires Mg(2+) as cofactor.

The protein resides in the cytoplasm. It carries out the reaction isopentenyl diphosphate = dimethylallyl diphosphate. Involved in the biosynthesis of isoprenoids. Catalyzes the 1,3-allylic rearrangement of the homoallylic substrate isopentenyl (IPP) to its allylic isomer, dimethylallyl diphosphate (DMAPP). This Thermoplasma volcanium (strain ATCC 51530 / DSM 4299 / JCM 9571 / NBRC 15438 / GSS1) protein is Isopentenyl-diphosphate delta-isomerase.